The following is a 178-amino-acid chain: ATP synthase subunit delta (178 aa).

The protein belongs to the ATPase delta chain family. F-type ATPases have 2 components, F(1) - the catalytic core - and F(0) - the membrane proton channel. F(1) has five subunits: alpha(3), beta(3), gamma(1), delta(1), epsilon(1). F(0) has three main subunits: a(1), b(2) and c(10-14). The alpha and beta chains form an alternating ring which encloses part of the gamma chain. F(1) is attached to F(0) by a central stalk formed by the gamma and epsilon chains, while a peripheral stalk is formed by the delta and b chains.

The protein resides in the cell inner membrane. Functionally, f(1)F(0) ATP synthase produces ATP from ADP in the presence of a proton or sodium gradient. F-type ATPases consist of two structural domains, F(1) containing the extramembraneous catalytic core and F(0) containing the membrane proton channel, linked together by a central stalk and a peripheral stalk. During catalysis, ATP synthesis in the catalytic domain of F(1) is coupled via a rotary mechanism of the central stalk subunits to proton translocation. This protein is part of the stalk that links CF(0) to CF(1). It either transmits conformational changes from CF(0) to CF(1) or is implicated in proton conduction. The protein is ATP synthase subunit delta of Nitrosospira multiformis (strain ATCC 25196 / NCIMB 11849 / C 71).